The sequence spans 120 residues: NAD(P)H-quinone oxidoreductase subunit 3, chloroplastic (120 aa).

3 consecutive transmembrane segments (helical) span residues Phe-2–Ile-22, Met-64–Leu-84, and Ile-88–Leu-108.

Belongs to the complex I subunit 3 family. As to quaternary structure, NDH is composed of at least 16 different subunits, 5 of which are encoded in the nucleus.

The protein localises to the plastid. It is found in the chloroplast thylakoid membrane. It carries out the reaction a plastoquinone + NADH + (n+1) H(+)(in) = a plastoquinol + NAD(+) + n H(+)(out). The enzyme catalyses a plastoquinone + NADPH + (n+1) H(+)(in) = a plastoquinol + NADP(+) + n H(+)(out). Its function is as follows. NDH shuttles electrons from NAD(P)H:plastoquinone, via FMN and iron-sulfur (Fe-S) centers, to quinones in the photosynthetic chain and possibly in a chloroplast respiratory chain. The immediate electron acceptor for the enzyme in this species is believed to be plastoquinone. Couples the redox reaction to proton translocation, and thus conserves the redox energy in a proton gradient. This is NAD(P)H-quinone oxidoreductase subunit 3, chloroplastic from Oenothera argillicola (Appalachian evening primrose).